Reading from the N-terminus, the 79-residue chain is Acyl carrier protein (79 aa).

One can recognise a Carrier domain in the interval 4–79 (AEIKDKVYDI…QAIDYIVNKK (76 aa)). An O-(pantetheine 4'-phosphoryl)serine modification is found at serine 39.

This sequence belongs to the acyl carrier protein (ACP) family. Post-translationally, 4'-phosphopantetheine is transferred from CoA to a specific serine of apo-ACP by AcpS. This modification is essential for activity because fatty acids are bound in thioester linkage to the sulfhydryl of the prosthetic group.

It localises to the cytoplasm. The protein operates within lipid metabolism; fatty acid biosynthesis. Its function is as follows. Carrier of the growing fatty acid chain in fatty acid biosynthesis. The protein is Acyl carrier protein of Pelodictyon phaeoclathratiforme (strain DSM 5477 / BU-1).